The sequence spans 72 residues: UPF0270 protein YheU (72 aa).

Belongs to the UPF0270 family.

The sequence is that of UPF0270 protein YheU from Salmonella dublin (strain CT_02021853).